A 560-amino-acid chain; its full sequence is uncharacterized protein (560 aa).

The 281-residue stretch at 1–281 (MLWNWVALVG…LGSFFHVAMN (281 aa)) folds into the ABC transmembrane type-1 domain. A run of 7 helical transmembrane segments spans residues 2-22 (LWNWVALVGGIISAVVFSYIL), 32-52 (LLSAVILGIVLIAALALRAFA), 108-128 (IYFGRYLPQLFYSLLAPLTLF), 138-160 (TAIILLICVPLIPMSIIAVNKIA), 168-188 (WSIYVGLGSSFLDNLQGLITL), 223-243 (VSLMDLLAYGGAAIGILTALL), and 249-269 (QLSVLGVILFILLSSEFFIPL). The ABC transporter domain maps to 314–547 (VEIKDLHFSY…QGAYAEMFQQ (234 aa)). An ATP-binding site is contributed by 347 to 354 (GKSGCGKS).

Belongs to the ABC transporter superfamily.

It is found in the cell inner membrane. This is an uncharacterized protein from Haemophilus influenzae (strain ATCC 51907 / DSM 11121 / KW20 / Rd).